Here is a 556-residue protein sequence, read N- to C-terminus: MLNLCHALRGVRQFSCSVIVKVKCASCSIKLQDQDPSKPGYYTKPKSLPDSKLNPDLQDLKYLLFSQDIQLSKQAIQNDPDLKTKRDLLLRVICKRCSNALHHNNYNPEEFPESTLNDILNYVPRGSNVMHIVPFVEFPLHLDPNVLKRNDLDTTLVLTKSDQVFKDKNAVSKKVPIFMKQFLKNTLRIDSNKTFAISALKNWNISMFYNYFKNYTYLLGNPNVGKSTLINTLLQKYLGYKVKIDSTGKINSPSEEVMQEAFTNPKNFFKIQAAGVSHIPNLTRSGQAYQVGGKILFDLPGYSTSTSRLRLEEPIDERWLQRLRKTDLFNRKHIKQKTYESMKGTSQGGCYTVGGIFYLVPPKGSINQIVKYIPGPSKTFKNIEKGIDVFNSCNSSSGTHPLSRYCGIKSVICEKSQYKRYAIPPFIGSIEIVLKDIGYILLRTTGRYEFKGLHEIWIPRGIQVGIREPLENLIESGYQRYIETNGKESSCPRDRPIISSLYEMAPDEADTLNAVKKSYLEKTEKDLSARRFVDDDPYDLVQHLEKKKNPYWYYQW.

Residues 1–21 (MLNLCHALRGVRQFSCSVIVK) constitute a mitochondrion transit peptide. In terms of domain architecture, CP-type G spans 113–305 (ESTLNDILNY…LFDLPGYSTS (193 aa)).

The protein belongs to the TRAFAC class YlqF/YawG GTPase family. GEP3 subfamily.

Its subcellular location is the mitochondrion. Its function is as follows. Interacts genetically with prohibitins and thus may be involved in the mitochondrial lipid metabolism. The chain is Genetic interactor of prohibitins 3, mitochondrial (GEP3) from Saccharomyces cerevisiae (strain AWRI1631) (Baker's yeast).